The following is a 189-amino-acid chain: Glycerol-3-phosphate acyltransferase (189 aa).

Transmembrane regions (helical) follow at residues 1 to 21 (MFWL…AILL), 51 to 71 (LAVL…LIAH), 77 to 97 (LQQQ…PLYF), 111 to 131 (MLLG…ALTF), and 151 to 171 (LLAW…LLIV).

It belongs to the PlsY family. Probably interacts with PlsX.

It is found in the cell inner membrane. The enzyme catalyses an acyl phosphate + sn-glycerol 3-phosphate = a 1-acyl-sn-glycero-3-phosphate + phosphate. The protein operates within lipid metabolism; phospholipid metabolism. Its function is as follows. Catalyzes the transfer of an acyl group from acyl-phosphate (acyl-PO(4)) to glycerol-3-phosphate (G3P) to form lysophosphatidic acid (LPA). This enzyme utilizes acyl-phosphate as fatty acyl donor, but not acyl-CoA or acyl-ACP. This is Glycerol-3-phosphate acyltransferase from Pseudomonas fluorescens (strain ATCC BAA-477 / NRRL B-23932 / Pf-5).